We begin with the raw amino-acid sequence, 350 residues long: N(4)-bis(aminopropyl)spermidine synthase (350 aa).

Belongs to the branched-chain polyamine synthase family.

Its subcellular location is the cytoplasm. The catalysed reaction is 2 S-adenosyl 3-(methylsulfanyl)propylamine + spermidine = N(4)-bis(aminopropyl)spermidine + 2 S-methyl-5'-thioadenosine + 2 H(+). It participates in amine and polyamine biosynthesis. In terms of biological role, involved in the biosynthesis of branched-chain polyamines, which support the growth of thermophiles under high-temperature conditions. Catalyzes the sequential condensation of spermidine with the aminopropyl groups of decarboxylated S-adenosylmethionines to produce N(4)-bis(aminopropyl)spermidine via N(4)-aminopropylspermidine. The chain is N(4)-bis(aminopropyl)spermidine synthase from Methanocaldococcus jannaschii (strain ATCC 43067 / DSM 2661 / JAL-1 / JCM 10045 / NBRC 100440) (Methanococcus jannaschii).